The following is a 958-amino-acid chain: Eukaryotic translation initiation factor 3 subunit A (958 aa).

A coiled-coil region spans residues 93-123 (MHLATERAELARNQAQALEEALDVEDLEADK). Residues 316-513 (LQLIASSVVL…GLSSLVNRVL (198 aa)) form the PCI domain. 2 coiled-coil regions span residues 548–696 (EALS…AKRE) and 796–861 (LRSE…LRKS). Positions 804 to 859 (KRLQEEEEARKREEAERRKKEEAERQAKLDEIAEKQRRRMLELEEKEKREREEILR) are enriched in basic and acidic residues. Positions 804-958 (KRLQEEEEAR…SRTSWPASRR (155 aa)) are disordered. The span at 877–894 (PAELGGAAPIPAAAATAP) shows a compositional bias: low complexity. A compositionally biased stretch (basic and acidic residues) spans 929 to 942 (KPDDRPSWRDERKP). Residues 946 to 958 (GSGSRTSWPASRR) show a composition bias toward polar residues.

Belongs to the eIF-3 subunit A family. As to quaternary structure, component of the eukaryotic translation initiation factor 3 (eIF-3) complex.

It localises to the cytoplasm. Functionally, RNA-binding component of the eukaryotic translation initiation factor 3 (eIF-3) complex, which is involved in protein synthesis of a specialized repertoire of mRNAs and, together with other initiation factors, stimulates binding of mRNA and methionyl-tRNAi to the 40S ribosome. The eIF-3 complex specifically targets and initiates translation of a subset of mRNAs involved in cell proliferation. In Nicotiana tabacum (Common tobacco), this protein is Eukaryotic translation initiation factor 3 subunit A (TIF3A1).